Consider the following 527-residue polypeptide: MLNNLLLFSLQISLIGTTLGGNVLIWPMEGSHWLNVKIIIDELIKKEHNVTVLVASGALFITPTSNPSLTFEIYKVPFGKERIEGVIKDFVLTWLENRPSPSTIWRFYQEMAKVIKDFHMVSQEICDGVLKNQQLMAKLKKSKFEVLVSDPVFPCGDIVALKLGIPFMYSLRFSPASTVEKHCGKVPYPPSYVPAVLSELTDQMSFTDRIRNFISYHLQDYMFETLWKSWDSYYSKALGGLLLCCPGWSAVADLGSLQPLLPGFKRFSRLSLHCSWDYRLPAGRPTTLCETMGKAEIWLIRTYWDFEFPRPYLPNFEFVGGLHCKPAKPLPKVLWRYKGKKPATLGNNTQLFDWIPQNDLLGHPKTKAFITHGGTNGIYEAIYHGVPMVGVPMFADQPDNIAHMKAKGAAVEVNLNTMTSVDLLSALRTVINEPSYKENAMRLSRIHHDQPVKPLDRAVFWIEFVMRHKGAKHLRVAAHDLTWFQYHSLDVIGFLLVCVTTAIFLVIQCCLFSCQKFGKIGKKKKRE.

The first 20 residues, 1–20, serve as a signal peptide directing secretion; sequence MLNNLLLFSLQISLIGTTLG. Over 21 to 491 the chain is Lumenal; sequence GNVLIWPMEG…TWFQYHSLDV (471 aa). 3 N-linked (GlcNAc...) asparagine glycosylation sites follow: N49, L313, and N347. The chain crosses the membrane as a helical span at residues 492-512; that stretch reads IGFLLVCVTTAIFLVIQCCLF. The Cytoplasmic portion of the chain corresponds to 513-527; the sequence is SCQKFGKIGKKKKRE.

It belongs to the UDP-glycosyltransferase family. In terms of tissue distribution, olfactory epithelium, brain and fetal lung. Not present in liver.

It is found in the membrane. Its subcellular location is the endoplasmic reticulum membrane. It catalyses the reaction glucuronate acceptor + UDP-alpha-D-glucuronate = acceptor beta-D-glucuronoside + UDP + H(+). The catalysed reaction is 16beta,17beta-estriol + UDP-alpha-D-glucuronate = 16beta,17beta-estriol 16-O-(beta-D-glucuronate) + UDP + H(+). The enzyme catalyses 16alpha,17alpha-estriol + UDP-alpha-D-glucuronate = 16alpha,17alpha-estriol 16-O-(beta-D-glucuronate) + UDP + H(+). It carries out the reaction 17alpha-estradiol + UDP-alpha-D-glucuronate = 17alpha-estradiol 17-O-(beta-D-glucuronate) + UDP + H(+). It catalyses the reaction 17alpha-estradiol + UDP-alpha-D-glucuronate = 17alpha-estradiol 3-O-(beta-D-glucuronate) + UDP + H(+). The catalysed reaction is 17beta-estradiol + UDP-alpha-D-glucuronate = 17beta-estradiol 3-O-(beta-D-glucuronate) + UDP + H(+). The enzyme catalyses 17beta-estradiol + UDP-alpha-D-glucuronate = 17beta-estradiol 17-O-(beta-D-glucuronate) + UDP + H(+). It carries out the reaction testosterone + UDP-alpha-D-glucuronate = testosterone 17-O-(beta-D-glucuronate) + UDP + H(+). It catalyses the reaction epitestosterone + UDP-alpha-D-glucuronate = epitestosterone 17-O-(beta-D-glucuronate) + UDP + H(+). The catalysed reaction is lithocholate + UDP-alpha-D-glucuronate = lithocholoyl-3-O-(beta-D-glucuronate) + UDP + H(+). The enzyme catalyses lithocholate + UDP-alpha-D-glucuronate = lithocholoyl-24-O-(beta-D-glucuronate) + UDP. It carries out the reaction deoxycholate + UDP-alpha-D-glucuronate = deoxycholoyl-24-O-(beta-D-glucuronate) + UDP. It catalyses the reaction hyodeoxycholate + UDP-alpha-D-glucuronate = hyodeoxycholoyl-24-O-(beta-D-glucuronate) + UDP. The catalysed reaction is hyocholate + UDP-alpha-D-glucuronate = hyocholoyl-24-O-(beta-D-glucuronate) + UDP. Functionally, UDP-glucuronosyltransferase (UGT) that catalyzes phase II biotransformation reactions in which lipophilic substrates are conjugated with glucuronic acid to increase the metabolite's water solubility, thereby facilitating excretion into either the urine or bile. Essential for the elimination and detoxification of drugs, xenobiotics and endogenous compounds. Catalyzes the glucuronidation of endogenous steroid hormones such as androgens (testosterone and epitestosterone) and estrogens (estradiol and epiestriol). Contributes to bile acid (BA) detoxification by catalyzing the glucuronidation of BA substrates, which are natural detergents for dietary lipids absorption. Shows a high affinity to aliphatic odorants such as citronellol as well as olfactory tissue specificity, and therefore may be involved in olfaction. Shows a potential role in detoxification of toxic waste compounds in the amniotic fluid before birth, and air-born chemical after birth. The sequence is that of UDP-glucuronosyltransferase 2A1 from Homo sapiens (Human).